The primary structure comprises 155 residues: Interleukin-2 (155 aa).

An N-terminal signal peptide occupies residues 1-20 (MYKIQLLSCIALTLALVANG). O-linked (GalNAc...) threonine glycosylation is present at Thr23. A disulfide bridge connects residues Cys79 and Cys127.

The protein belongs to the IL-2 family.

It is found in the secreted. In terms of biological role, cytokine produced by activated CD4-positive helper T-cells and to a lesser extend activated CD8-positive T-cells and natural killer (NK) cells that plays pivotal roles in the immune response and tolerance. Binds to a receptor complex composed of either the high-affinity trimeric IL-2R (IL2RA/CD25, IL2RB/CD122 and IL2RG/CD132) or the low-affinity dimeric IL-2R (IL2RB and IL2RG). Interaction with the receptor leads to oligomerization and conformation changes in the IL-2R subunits resulting in downstream signaling starting with phosphorylation of JAK1 and JAK3. In turn, JAK1 and JAK3 phosphorylate the receptor to form a docking site leading to the phosphorylation of several substrates including STAT5. This process leads to activation of several pathways including STAT, phosphoinositide-3-kinase/PI3K and mitogen-activated protein kinase/MAPK pathways. Functions as a T-cell growth factor and can increase NK-cell cytolytic activity as well. Promotes strong proliferation of activated B-cells and subsequently immunoglobulin production. Plays a pivotal role in regulating the adaptive immune system by controlling the survival and proliferation of regulatory T-cells, which are required for the maintenance of immune tolerance. Moreover, participates in the differentiation and homeostasis of effector T-cell subsets, including Th1, Th2, Th17 as well as memory CD8-positive T-cells. The polypeptide is Interleukin-2 (IL2) (Moschus berezovskii (Chinese forest musk deer)).